Here is a 276-residue protein sequence, read N- to C-terminus: Extracellular metalloprotease 1 (276 aa).

An N-terminal signal peptide occupies residues 1–18 (MRVSVPVLALAFGSLAAA). His-191 is a Zn(2+) binding site. Glu-192 is a catalytic residue. Residue His-195 participates in Zn(2+) binding. Residues 211–233 (GDYVSDTPPQRSPSSGCPVGRDS) are disordered. Residues Cys-227 and Cys-253 are joined by a disulfide bond.

Belongs to the peptidase M43B family.

The protein resides in the secreted. Functionally, secreted metalloproteinase that allows assimilation of proteinaceous substrates. Pays a pivotal role as a pathogenicity determinant during infections and contributes to the ability of the pathogen to persist within the mammalian host. Digests an immunodominant cell surface antigen (SOWgp) and prevents host recognition of endospores during the phase of development when these fungal cells are most vulnerable to phagocytic cell defenses. The sequence is that of Extracellular metalloprotease 1 (MEP1) from Coccidioides posadasii (strain C735) (Valley fever fungus).